The following is a 351-amino-acid chain: Uroporphyrinogen decarboxylase (351 aa).

Substrate contacts are provided by residues 25–29 (RQAGR), Asp-74, Tyr-151, Ser-206, and His-325.

It belongs to the uroporphyrinogen decarboxylase family. As to quaternary structure, homodimer.

It localises to the cytoplasm. It catalyses the reaction uroporphyrinogen III + 4 H(+) = coproporphyrinogen III + 4 CO2. The protein operates within porphyrin-containing compound metabolism; protoporphyrin-IX biosynthesis; coproporphyrinogen-III from 5-aminolevulinate: step 4/4. Functionally, catalyzes the decarboxylation of four acetate groups of uroporphyrinogen-III to yield coproporphyrinogen-III. In Prosthecochloris aestuarii (strain DSM 271 / SK 413), this protein is Uroporphyrinogen decarboxylase.